The following is a 158-amino-acid chain: Methylglyoxal synthase (158 aa).

In terms of domain architecture, MGS-like spans 1-158 (MRRKLRIALV…AFEESLKVKE (158 aa)). Substrate-binding positions include His12, Lys16, 38-41 (TGTT), and 63-64 (SG). Asp69 acts as the Proton donor/acceptor in catalysis. A substrate-binding site is contributed by His96.

This sequence belongs to the methylglyoxal synthase family.

It carries out the reaction dihydroxyacetone phosphate = methylglyoxal + phosphate. Functionally, catalyzes the formation of methylglyoxal from dihydroxyacetone phosphate. This is Methylglyoxal synthase from Treponema socranskii.